The primary structure comprises 966 residues: Protein STICHEL-like 4 (966 aa).

2 disordered regions span residues 64–118 and 200–237; these read RSLR…DRSS and RDNAAGNESEMSIASNSVPRGEKYEGEEGGGGRDREQN. Residues 75 to 84 are compositionally biased toward basic and acidic residues; it reads LKEDHQDSRE. Positions 98–108 are enriched in polar residues; it reads PIVSFGTSKVT. Residues 109–118 show a composition bias toward basic and acidic residues; it reads PSDEKFDRSS. Positions 208 to 217 are enriched in polar residues; the sequence is SEMSIASNSV. Positions 219-236 are enriched in basic and acidic residues; sequence RGEKYEGEEGGGGRDREQ. Position 384-391 (384-391) interacts with ATP; that stretch reads GPNGTGKT. Zn(2+)-binding residues include Cys403, Cys412, Cys415, and Cys418. A coiled-coil region spans residues 650–678; the sequence is SKEDMEKLKQALKTLSESEKQLRVSNDKL. The span at 706–717 shows a compositional bias: polar residues; that stretch reads FNHTPLTDSDPS. Residues 706-733 are disordered; it reads FNHTPLTDSDPSNHVVAGTRRDDSKQGF.

The protein belongs to the DnaX/STICHEL family.

The chain is Protein STICHEL-like 4 from Arabidopsis thaliana (Mouse-ear cress).